The sequence spans 516 residues: L-amino acid oxidase bordonein-L (516 aa).

The N-terminal stretch at 1–18 is a signal peptide; it reads MNVFFMFSLLFLAALGSC. Cysteines 28 and 189 form a disulfide. FAD contacts are provided by residues 61-62, 81-82, Arg-89, and 103-106; these read MA, EA, and GPMR. The substrate site is built by Arg-106 and His-239. Val-279 contributes to the FAD binding site. Cysteines 349 and 430 form a disulfide. The N-linked (GlcNAc...) asparagine glycan is linked to Asn-379. Substrate is bound at residue Tyr-390. FAD is bound by residues Glu-475 and 482-487; that span reads GWIDST. Position 482–483 (482–483) interacts with substrate; that stretch reads GW.

Homodimer; non-covalently linked. FAD serves as cofactor. In terms of processing, N-glycosylated. N-glycan probably consists of the disaccharide N-acetylglucosamine-fucose (HexNAc-Fuc). Expressed by the venom gland.

It is found in the secreted. The catalysed reaction is an L-alpha-amino acid + O2 + H2O = a 2-oxocarboxylate + H2O2 + NH4(+). It carries out the reaction L-leucine + O2 + H2O = 4-methyl-2-oxopentanoate + H2O2 + NH4(+). It catalyses the reaction L-phenylalanine + O2 + H2O = 3-phenylpyruvate + H2O2 + NH4(+). The enzyme catalyses L-tryptophan + O2 + H2O = indole-3-pyruvate + H2O2 + NH4(+). The catalysed reaction is L-methionine + O2 + H2O = 4-methylsulfanyl-2-oxobutanoate + H2O2 + NH4(+). It carries out the reaction L-isoleucine + O2 + H2O = (S)-3-methyl-2-oxopentanoate + H2O2 + NH4(+). It catalyses the reaction L-arginine + O2 + H2O = 5-guanidino-2-oxopentanoate + H2O2 + NH4(+). The enzyme catalyses L-histidine + O2 + H2O = 3-(imidazol-5-yl)pyruvate + H2O2 + NH4(+). Its function is as follows. Catalyzes an oxidative deamination of predominantly hydrophobic and aromatic L-amino acids, thus producing hydrogen peroxide that may contribute to the diverse toxic effects of this enzyme. Is highly active on L-Met, L-Leu, L-Trp, and L-Phe, moderately active on L-Ile, L-His, and L-Arg, and weakly or not active on L-Gln, L-Val, L-Asn, L-Ala, L-Lys, L-Ser, L-Thr, L-Pro, L-Asp, L-Gly, L-Tyr, L-Cys and L-Glu. This enzyme exhibits diverse biological activities, such as hemorrhage, hemolysis, edema, apoptosis of vascular endothelial cells or tumor cell lines, antibacterial and antiparasitic activities, as well as regulation of platelet aggregation. Its effect on platelets is controversial, since it either induces aggregation or inhibits agonist-induced aggregation. These different effects are probably due to different experimental conditions. In vitro, the enzyme exhibits cytotoxicity against fibroblast cell line and kills Leishmania amazonensis promastigotes, intensified by substrate addition. The sequence is that of L-amino acid oxidase bordonein-L from Crotalus durissus terrificus (South American rattlesnake).